Here is a 348-residue protein sequence, read N- to C-terminus: Protein pof5 (348 aa).

This sequence to yeast YDR306C. As to quaternary structure, interacts with skp1.

Its subcellular location is the mitochondrion. The sequence is that of Protein pof5 (pof5) from Schizosaccharomyces pombe (strain 972 / ATCC 24843) (Fission yeast).